The following is a 359-amino-acid chain: Histidinol-phosphate aminotransferase (359 aa).

Position 212 is an N6-(pyridoxal phosphate)lysine (K212).

This sequence belongs to the class-II pyridoxal-phosphate-dependent aminotransferase family. Histidinol-phosphate aminotransferase subfamily. In terms of assembly, homodimer. It depends on pyridoxal 5'-phosphate as a cofactor.

It catalyses the reaction L-histidinol phosphate + 2-oxoglutarate = 3-(imidazol-4-yl)-2-oxopropyl phosphate + L-glutamate. It functions in the pathway amino-acid biosynthesis; L-histidine biosynthesis; L-histidine from 5-phospho-alpha-D-ribose 1-diphosphate: step 7/9. The sequence is that of Histidinol-phosphate aminotransferase from Buchnera aphidicola subsp. Schlechtendalia chinensis.